The sequence spans 279 residues: Phosphatidylglycerol--prolipoprotein diacylglyceryl transferase (279 aa).

A run of 4 helical transmembrane segments spans residues 4–24, 44–64, 76–96, and 104–124; these read IGPL…FLGY, VVFW…VLTS, LYIW…GLTF, and GYPL…GIVA. Arg126 contributes to the a 1,2-diacyl-sn-glycero-3-phospho-(1'-sn-glycerol) binding site. 3 helical membrane-spanning segments follow: residues 182 to 202, 206 to 226, and 245 to 265; these read LTQV…LYWL, PFYG…RSVL, and LGIG…LLSL.

This sequence belongs to the Lgt family.

Its subcellular location is the cell inner membrane. The enzyme catalyses L-cysteinyl-[prolipoprotein] + a 1,2-diacyl-sn-glycero-3-phospho-(1'-sn-glycerol) = an S-1,2-diacyl-sn-glyceryl-L-cysteinyl-[prolipoprotein] + sn-glycerol 1-phosphate + H(+). It participates in protein modification; lipoprotein biosynthesis (diacylglyceryl transfer). Functionally, catalyzes the transfer of the diacylglyceryl group from phosphatidylglycerol to the sulfhydryl group of the N-terminal cysteine of a prolipoprotein, the first step in the formation of mature lipoproteins. The polypeptide is Phosphatidylglycerol--prolipoprotein diacylglyceryl transferase (Thermus thermophilus (strain ATCC 27634 / DSM 579 / HB8)).